Consider the following 283-residue polypeptide: Shikimate kinase (283 aa).

86–96 lines the ATP pocket; the sequence is PIKSGLSSSSA.

It belongs to the GHMP kinase family. Archaeal shikimate kinase subfamily.

The protein localises to the cytoplasm. It carries out the reaction shikimate + ATP = 3-phosphoshikimate + ADP + H(+). It functions in the pathway metabolic intermediate biosynthesis; chorismate biosynthesis; chorismate from D-erythrose 4-phosphate and phosphoenolpyruvate: step 5/7. This chain is Shikimate kinase, found in Methanococcus maripaludis (strain C6 / ATCC BAA-1332).